A 158-amino-acid polypeptide reads, in one-letter code: Dysbindin domain-containing protein 1 (158 aa).

Disordered stretches follow at residues 1–50 and 93–158; these read MEPP…VPAP and ADSD…PQED. 2 positions are modified to phosphoserine: Ser-95 and Ser-119. Residues 125–141 are compositionally biased toward basic and acidic residues; the sequence is TRAEQSHEKQPLGDPER.

This sequence belongs to the dysbindin family.

The protein is Dysbindin domain-containing protein 1 (DBNDD1) of Homo sapiens (Human).